Reading from the N-terminus, the 311-residue chain is Ribosomal RNA small subunit methyltransferase H (311 aa).

Residues 33–35 (AGH), D53, F80, D101, and Q108 contribute to the S-adenosyl-L-methionine site.

It belongs to the methyltransferase superfamily. RsmH family.

Its subcellular location is the cytoplasm. It catalyses the reaction cytidine(1402) in 16S rRNA + S-adenosyl-L-methionine = N(4)-methylcytidine(1402) in 16S rRNA + S-adenosyl-L-homocysteine + H(+). In terms of biological role, specifically methylates the N4 position of cytidine in position 1402 (C1402) of 16S rRNA. The sequence is that of Ribosomal RNA small subunit methyltransferase H from Geobacter sulfurreducens (strain ATCC 51573 / DSM 12127 / PCA).